Reading from the N-terminus, the 240-residue chain is Tetrahydromethanopterin S-methyltransferase subunit A (240 aa).

The Cytoplasmic segment spans residues 1-218 (MAEKREPAAG…KFHAGVHAGK (218 aa)). H85 serves as a coordination point for 5-hydroxybenzimidazolylcob(I)amide. Residues 219–239 (FEGIMIGLAITLSLLGLILFG) form a helical membrane-spanning segment. R240 is a topological domain (extracellular).

It belongs to the MtrA family. As to quaternary structure, the complex is composed of 8 subunits; MtrA, MtrB, MtrC, MtrD, MtrE, MtrF, MtrG and MtrH. Requires 5-hydroxybenzimidazolylcob(I)amide as cofactor.

The protein localises to the cell membrane. The catalysed reaction is 5-methyl-5,6,7,8-tetrahydromethanopterin + coenzyme M + 2 Na(+)(in) = 5,6,7,8-tetrahydromethanopterin + methyl-coenzyme M + 2 Na(+)(out). The protein operates within one-carbon metabolism; methanogenesis from CO(2); methyl-coenzyme M from 5,10-methylene-5,6,7,8-tetrahydromethanopterin: step 2/2. Its function is as follows. Part of a complex that catalyzes the formation of methyl-coenzyme M and tetrahydromethanopterin from coenzyme M and methyl-tetrahydromethanopterin. This is an energy-conserving, sodium-ion translocating step. The protein is Tetrahydromethanopterin S-methyltransferase subunit A of Methanohalophilus mahii (strain ATCC 35705 / DSM 5219 / SLP).